The sequence spans 127 residues: Glycine cleavage system H protein (127 aa).

One can recognise a Lipoyl-binding domain in the interval 22–104 (AVVIGITHFA…YEGAWMVKVE (83 aa)). Lys63 is subject to N6-lipoyllysine.

Belongs to the GcvH family. The glycine cleavage system is composed of four proteins: P, T, L and H. It depends on (R)-lipoate as a cofactor.

Its function is as follows. The glycine cleavage system catalyzes the degradation of glycine. The H protein shuttles the methylamine group of glycine from the P protein to the T protein. Functionally, is also involved in protein lipoylation via its role as an octanoyl/lipoyl carrier protein intermediate. The sequence is that of Glycine cleavage system H protein from Bacillus mycoides (strain KBAB4) (Bacillus weihenstephanensis).